The chain runs to 456 residues: Methylenetetrahydrofolate--tRNA-(uracil-5-)-methyltransferase TrmFO (456 aa).

An FAD-binding site is contributed by 7–12 (GAGLAG).

The protein belongs to the MnmG family. TrmFO subfamily. The cofactor is FAD.

It is found in the cytoplasm. The catalysed reaction is uridine(54) in tRNA + (6R)-5,10-methylene-5,6,7,8-tetrahydrofolate + NADH + H(+) = 5-methyluridine(54) in tRNA + (6S)-5,6,7,8-tetrahydrofolate + NAD(+). It carries out the reaction uridine(54) in tRNA + (6R)-5,10-methylene-5,6,7,8-tetrahydrofolate + NADPH + H(+) = 5-methyluridine(54) in tRNA + (6S)-5,6,7,8-tetrahydrofolate + NADP(+). In terms of biological role, catalyzes the folate-dependent formation of 5-methyl-uridine at position 54 (M-5-U54) in all tRNAs. The chain is Methylenetetrahydrofolate--tRNA-(uracil-5-)-methyltransferase TrmFO from Synechococcus sp. (strain RCC307).